Reading from the N-terminus, the 728-residue chain is Meiotic sister-chromatid recombination protein 3 (728 aa).

Disordered stretches follow at residues 33–171, 236–261, 300–335, 363–403, 422–454, 495–514, and 561–728; these read QLSA…GRTQ, NETD…LNVE, PTHQ…EAEA, SDNA…VKSN, SAPH…ANTG, VGVS…QHYL, and YGYQ…KSSR. The span at 35-46 shows a compositional bias: low complexity; sequence SAAAASAASAAS. The span at 48-58 shows a compositional bias: polar residues; it reads DRTNYSRSHSL. Phosphoserine occurs at positions 57 and 64. The span at 80–93 shows a compositional bias: low complexity; sequence STSSAAPPTSRAAA. Composition is skewed to polar residues over residues 95–106, 118–132, and 140–171; these read QYSQKTYSLRSQ, YTTN…TSGA, and KNKS…GRTQ. A phosphoserine mark is found at Ser-127, Ser-151, and Ser-155. A compositionally biased stretch (basic and acidic residues) spans 251–261; the sequence is HLQDDSELNVE. Positions 309-326 are enriched in basic residues; that stretch reads IHNKRKQASTTRRKKRPP. Ser-363 is modified (phosphoserine). Composition is skewed to polar residues over residues 363-373 and 385-403; these read SDNASAPLGSN and TLRS…VKSN. A compositionally biased stretch (polar residues) spans 590–634; the sequence is EGVTTAKPSSNEGVMTNPVVTDSPSPLQQQIDSTTASSNGQSQGN. Residues 635–646 show a composition bias toward low complexity; the sequence is VPTSAVASTTRT. Position 646 is a phosphothreonine (Thr-646). Polar residues-rich tracts occupy residues 654 to 668, 675 to 684, and 691 to 708; these read NLKS…QTPQ, DPTTSSTNEL, and MVTS…TQDP. At Ser-660 the chain carries Phosphoserine. A compositionally biased stretch (basic residues) spans 711 to 728; sequence KHKKSSFFTKLFKKKSSR.

The protein localises to the cell membrane. Its function is as follows. May be involved in the control of meiotic sister-chromatid recombination. The polypeptide is Meiotic sister-chromatid recombination protein 3 (MSC3) (Saccharomyces cerevisiae (strain ATCC 204508 / S288c) (Baker's yeast)).